The following is a 339-amino-acid chain: Phosphate acyltransferase (339 aa).

Belongs to the PlsX family. In terms of assembly, homodimer. Probably interacts with PlsY.

The protein localises to the cytoplasm. It carries out the reaction a fatty acyl-[ACP] + phosphate = an acyl phosphate + holo-[ACP]. It functions in the pathway lipid metabolism; phospholipid metabolism. In terms of biological role, catalyzes the reversible formation of acyl-phosphate (acyl-PO(4)) from acyl-[acyl-carrier-protein] (acyl-ACP). This enzyme utilizes acyl-ACP as fatty acyl donor, but not acyl-CoA. This is Phosphate acyltransferase from Methylococcus capsulatus (strain ATCC 33009 / NCIMB 11132 / Bath).